A 154-amino-acid chain; its full sequence is Myoglobin (154 aa).

The Globin domain maps to G2–K148. S4 carries the post-translational modification Phosphoserine. Position 65 (H65) interacts with nitrite. Residue H65 coordinates O2. T68 carries the post-translational modification Phosphothreonine. Position 94 (H94) interacts with heme b.

Belongs to the globin family. Monomeric.

Its subcellular location is the cytoplasm. It localises to the sarcoplasm. The enzyme catalyses Fe(III)-heme b-[protein] + nitric oxide + H2O = Fe(II)-heme b-[protein] + nitrite + 2 H(+). It carries out the reaction H2O2 + AH2 = A + 2 H2O. Monomeric heme protein which primary function is to store oxygen and facilitate its diffusion within muscle tissues. Reversibly binds oxygen through a pentacoordinated heme iron and enables its timely and efficient release as needed during periods of heightened demand. Depending on the oxidative conditions of tissues and cells, and in addition to its ability to bind oxygen, it also has a nitrite reductase activity whereby it regulates the production of bioactive nitric oxide. Under stress conditions, like hypoxia and anoxia, it also protects cells against reactive oxygen species thanks to its pseudoperoxidase activity. The protein is Myoglobin (MB) of Vulpes chama (Cape fox).